The chain runs to 493 residues: Neuronal pentraxin receptor (493 aa).

The Cytoplasmic segment spans residues 1-2 (MK). Residues 3-23 (FLAVLLAAGMLAFLGAVICII) traverse the membrane as a helical; Signal-anchor for type II membrane protein segment. Residues 24–493 (ASVPLAASPA…FDVCKGRAKA (470 aa)) are Extracellular-facing. A disordered region spans residues 37–72 (PGGTDNASAASAAGGSGPQRSLSALHSAGGSAGPSV). N-linked (GlcNAc...) asparagine glycosylation is present at Asn-42. A compositionally biased stretch (low complexity) spans 57-72 (SLSALHSAGGSAGPSV). Asn-211 carries N-linked (GlcNAc...) asparagine glycosylation. Positions 285-487 (DAFKVSIPIR…GAKKAAFDVC (203 aa)) constitute a Pentraxin (PTX) domain. A disulfide bridge connects residues Cys-315 and Cys-376. Residues Asn-340, Glu-418, Gln-419, Asp-420, and Gln-430 each contribute to the Ca(2+) site. Residue Asn-456 is glycosylated (N-linked (GlcNAc...) asparagine).

As to quaternary structure, heteropentamer with NPTX1 and/or NPTX2. Also binds taipoxin-associated calcium-binding protein 49 (TCBP49/RCN2). Interacts with KLHL2. The cofactor is Ca(2+). Ubiquitinated by a cullin-RING-based BCR (BTB-CUL3-RBX1) E3 ubiquitin-protein ligase complex containing KLHL2.

It localises to the membrane. Functionally, may be involved in mediating uptake of synaptic material during synapse remodeling or in mediating the synaptic clustering of AMPA glutamate receptors at a subset of excitatory synapses. The chain is Neuronal pentraxin receptor (Nptxr) from Mus musculus (Mouse).